Reading from the N-terminus, the 612-residue chain is Amyloid-beta precursor-like protein (612 aa).

The N-terminal stretch at 1–21 is a signal peptide; that stretch reads MGPSVRPGFLVVVIGLQFVAA. Residues 22–542 are Extracellular-facing; it reads SMEVNSRKFE…NLYANSHANS (521 aa). Residues 28–122 are GFLD subdomain; the sequence is RKFEPMVAFI…PFRCLVGPFQ (95 aa). The 162-residue stretch at 28 to 189 folds into the E1 domain; it reads RKFEPMVAFI…SGVEFVCCPK (162 aa). Intrachain disulfides connect Cys38–Cys60, Cys71–Cys116, Cys96–Cys103, Cys132–Cys187, Cys143–Cys173, and Cys157–Cys186. 3 N-linked (GlcNAc...) asparagine glycosylation sites follow: Asn99, Asn108, and Asn150. A cuBD subdomain region spans residues 130-189; sequence EHCIFDHYHDPRVCNEFDQCNETAMSKCSARGMTTQSFAMLWPCQEPGHFSGVEFVCCPK. The 197-residue stretch at 223–419 folds into the E2 domain; sequence GDSKYMSKYA…KQVRPNIDKF (197 aa). Disordered regions lie at residues 251 to 276 and 437 to 490; these read ERDT…TDPK and QEPT…FDSE. Basic and acidic residues-rich tracts occupy residues 439-453 and 470-483; these read PTPK…KAED and KPTE…EDIK. A helical transmembrane segment spans residues 543 to 563; that stretch reads VLGIAIGGVVVFIIIVVAVVM. Over 564–612 the chain is Cytoplasmic; that stretch reads LKRRTQRQRVTHGFVEVDPAASPEERHVANMQMSGYENPTYKYFEMQNQ. Residues 598–612 are required for the interaction with kinesin heavy chain and for anterograde transport in axons; that stretch reads GYENPTYKYFEMQNQ. Residues 599 to 604 carry the YENPXY motif motif; sequence YENPTY.

It belongs to the APP family. Interacts (via cytoplasmic domain) with kinesin heavy chain. In terms of tissue distribution, expressed in the cervicothoracic ganglion (stellate ganglion) (at protein level).

It is found in the cell membrane. Its subcellular location is the cell projection. The protein resides in the axon. Functionally, acts as a kinesin I membrane receptor, thereby playing a role in axonal anterograde transport of cargo towards synapses in axons. The polypeptide is Amyloid-beta precursor-like protein (Doryteuthis pealeii (Longfin inshore squid)).